The primary structure comprises 450 residues: Asparagine--tRNA ligase (450 aa).

The protein belongs to the class-II aminoacyl-tRNA synthetase family. As to quaternary structure, homodimer.

The protein localises to the cytoplasm. It carries out the reaction tRNA(Asn) + L-asparagine + ATP = L-asparaginyl-tRNA(Asn) + AMP + diphosphate + H(+). This is Asparagine--tRNA ligase from Enterococcus faecalis (strain ATCC 700802 / V583).